The primary structure comprises 363 residues: MEKREDGGILTYDGRYVMYNVLGNIFELSSKYIPPIEPIGRGAYGIVCCATNSETNEEVAIKKIANAFDNRVDAKRTLREIKLLSHMDHDNVIKIKDIIELPEKERFEDVYIVYELMDTDLHQIIRSTQTLTDDHCQYFLYQILRGLKYIHSANVLHRDLKPSNLVLNTNCDLKICDFGLARTSNETEIMTEYVVTRWYRAPELLLNSSEYTGAIDIWSVGCIFMEILRRETLFPGKDYVQQLKLITELLGSPDDSDLDFLRSDNARKYVKQLPHVQKQSFREKFPNISPMALDLAEKMLVFDPSKRITVDEALKQPYLASLHEINEEPTCPTPFSFDFEETALDEQDIKELVWRESLHFKNM.

Residues 33–319 (IPPIEPIGRG…VDEALKQPYL (287 aa)) enclose the Protein kinase domain. ATP-binding positions include 39-47 (IGRGAYGIV) and Lys-62. The Proton acceptor role is filled by Asp-159. At Thr-191 the chain carries Phosphothreonine. Positions 191-193 (TEY) match the TXY motif. Position 193 is a phosphotyrosine (Tyr-193). Thr-196 carries the phosphothreonine modification.

Belongs to the protein kinase superfamily. CMGC Ser/Thr protein kinase family. MAP kinase subfamily. In terms of assembly, interacts with MKK6. In terms of processing, dually phosphorylated on Thr-191 and Tyr-193, which activates the enzyme. Expressed in roots, stems and flower buds.

It carries out the reaction L-seryl-[protein] + ATP = O-phospho-L-seryl-[protein] + ADP + H(+). It catalyses the reaction L-threonyl-[protein] + ATP = O-phospho-L-threonyl-[protein] + ADP + H(+). Activated by threonine and tyrosine phosphorylation. Activated by the MAP kinase kinase MKK6 in vitro. Its function is as follows. MKK6-MPK13 module positively regulates lateral root formation. The sequence is that of Mitogen-activated protein kinase 13 (MPK13) from Arabidopsis thaliana (Mouse-ear cress).